A 236-amino-acid chain; its full sequence is Aspartate/glutamate leucyltransferase (236 aa).

It belongs to the R-transferase family. Bpt subfamily.

It is found in the cytoplasm. The enzyme catalyses N-terminal L-glutamyl-[protein] + L-leucyl-tRNA(Leu) = N-terminal L-leucyl-L-glutamyl-[protein] + tRNA(Leu) + H(+). It catalyses the reaction N-terminal L-aspartyl-[protein] + L-leucyl-tRNA(Leu) = N-terminal L-leucyl-L-aspartyl-[protein] + tRNA(Leu) + H(+). Its function is as follows. Functions in the N-end rule pathway of protein degradation where it conjugates Leu from its aminoacyl-tRNA to the N-termini of proteins containing an N-terminal aspartate or glutamate. The sequence is that of Aspartate/glutamate leucyltransferase from Halorhodospira halophila (strain DSM 244 / SL1) (Ectothiorhodospira halophila (strain DSM 244 / SL1)).